A 240-amino-acid polypeptide reads, in one-letter code: Uridylate kinase (240 aa).

13-16 (KLSG) serves as a coordination point for ATP. The tract at residues 21–26 (GDKGFG) is involved in allosteric activation by GTP. G55 contacts UMP. ATP is bound by residues G56 and R60. UMP is bound by residues D75 and 136–143 (IGNPYFST). Positions 164, 170, and 173 each coordinate ATP.

It belongs to the UMP kinase family. In terms of assembly, homohexamer.

It is found in the cytoplasm. It carries out the reaction UMP + ATP = UDP + ADP. Its pathway is pyrimidine metabolism; CTP biosynthesis via de novo pathway; UDP from UMP (UMPK route): step 1/1. Allosterically activated by GTP. Inhibited by UTP. Catalyzes the reversible phosphorylation of UMP to UDP. This chain is Uridylate kinase, found in Staphylococcus haemolyticus (strain JCSC1435).